The following is a 428-amino-acid chain: Adenylosuccinate synthetase (428 aa).

Residues 12–18 (GDEGKGK) and 40–42 (GHT) contribute to the GTP site. Aspartate 13 serves as the catalytic Proton acceptor. 2 residues coordinate Mg(2+): aspartate 13 and glycine 40. Residues 13 to 16 (DEGK), 38 to 41 (NAGH), threonine 130, arginine 144, glutamine 225, threonine 240, and arginine 304 each bind IMP. The active-site Proton donor is the histidine 41. 300–306 (ATTGRPR) contacts substrate. GTP contacts are provided by residues arginine 306, 332–334 (KLD), and 415–417 (SVG).

Belongs to the adenylosuccinate synthetase family. As to quaternary structure, homodimer. Mg(2+) serves as cofactor.

It is found in the cytoplasm. The catalysed reaction is IMP + L-aspartate + GTP = N(6)-(1,2-dicarboxyethyl)-AMP + GDP + phosphate + 2 H(+). Its pathway is purine metabolism; AMP biosynthesis via de novo pathway; AMP from IMP: step 1/2. Functionally, plays an important role in the de novo pathway of purine nucleotide biosynthesis. Catalyzes the first committed step in the biosynthesis of AMP from IMP. This Lawsonia intracellularis (strain PHE/MN1-00) protein is Adenylosuccinate synthetase.